The primary structure comprises 282 residues: Snake venom serine protease BmSP (282 aa).

A signal peptide spans 1–18; that stretch reads MVLIGVLASLLILQLSYS. Residues 19–56 constitute a propeptide that is removed on maturation; sequence KSLDDGAKESAYDDEIQQSSWGNSTVNTTLTETVVIQL. N41 and N45 each carry an N-linked (GlcNAc...) asparagine glycan. Residues 57-280 form the Peptidase S1 domain; that stretch reads IMGGSECYKS…YIDWIKGIIA (224 aa). 5 disulfide bridges follow: C63-C195, C82-C98, C174-C241, C206-C220, and C231-C256. H97 acts as the Charge relay system in catalysis. Residue N135 is glycosylated (N-linked (GlcNAc...) asparagine). Catalysis depends on D142, which acts as the Charge relay system. Residues N149 and N153 are each glycosylated (N-linked (GlcNAc...) asparagine). The active-site Charge relay system is S235.

This sequence belongs to the peptidase S1 family. Snake venom subfamily. As to quaternary structure, monomer. In terms of tissue distribution, expressed by the venom gland.

The protein resides in the secreted. Its function is as follows. Snake venom serine protease that may act in the hemostasis system of the prey. This chain is Snake venom serine protease BmSP, found in Bungarus multicinctus (Many-banded krait).